The chain runs to 489 residues: Ataxin-10 homolog (489 aa).

It belongs to the ataxin-10 family.

It localises to the cytoplasm. Functionally, may play a role in the regulation of cytokinesis. This Debaryomyces hansenii (strain ATCC 36239 / CBS 767 / BCRC 21394 / JCM 1990 / NBRC 0083 / IGC 2968) (Yeast) protein is Ataxin-10 homolog (CTR86).